A 267-amino-acid polypeptide reads, in one-letter code: Undecaprenyl-diphosphatase (267 aa).

7 consecutive transmembrane segments (helical) span residues 1 to 21, 40 to 60, 85 to 105, 112 to 132, 189 to 209, 219 to 239, and 245 to 265; these read MSLF…FLPI, GQAI…LYFW, LAFL…FLEV, LRSI…LYWA, AMLM…AEVI, DGAI…TLMF, and VSFT…LVIA.

Belongs to the UppP family.

Its subcellular location is the cell inner membrane. The enzyme catalyses di-trans,octa-cis-undecaprenyl diphosphate + H2O = di-trans,octa-cis-undecaprenyl phosphate + phosphate + H(+). Catalyzes the dephosphorylation of undecaprenyl diphosphate (UPP). Confers resistance to bacitracin. The protein is Undecaprenyl-diphosphatase of Jannaschia sp. (strain CCS1).